A 403-amino-acid polypeptide reads, in one-letter code: Sorting nexin-32 (403 aa).

Positions 20–168 (LQGDSSLQVE…VFLEYGQDLS (149 aa)) constitute a PX domain. The stretch at 258–335 (NQLRTSFLKL…KARTRNREVR (78 aa)) forms a coiled coil.

Belongs to the sorting nexin family.

May be involved in several stages of intracellular trafficking. The chain is Sorting nexin-32 (SNX32) from Homo sapiens (Human).